An 871-amino-acid polypeptide reads, in one-letter code: Protein pob1 (871 aa).

The 64-residue stretch at 2–65 folds into the SH3 domain; that stretch reads ASQRFVIALH…PASHVELISD (64 aa). Positions 42-168 are disordered; it reads WWEGEDEQGN…PSSDLSNFNT (127 aa). A compositionally biased stretch (basic and acidic residues) spans 62–80; that stretch reads LISDERSDSSDSRRGKEDF. Composition is skewed to low complexity over residues 88 to 100 and 109 to 124; these read TRSSLSSSRSTSS and LYSNNSLSSSHSSILN. Over residues 131–168 the composition is skewed to polar residues; sequence SKPSVPSNFNSMFPSSKQEGPSPLLDNQPSSDLSNFNT. Residues Ser224 and Ser225 each carry the phosphoserine modification. Tyr229 bears the Phosphotyrosine mark. Phosphoserine is present on Ser241. Positions 250–313 constitute an SAM domain; sequence WSTEEVVEWL…LRKIQQLKDS (64 aa). The segment covering 329–343 has biased composition (low complexity); sequence ISVSQSSDSSSSIPK. Disordered regions lie at residues 329 to 371 and 384 to 670; these read ISVS…NRPT and PDLD…KSKR. Polar residues-rich tracts occupy residues 384–395 and 404–451; these read PDLDSSPSTDWN and TPSS…NSGL. A phosphoserine mark is found at Ser433, Ser439, and Ser440. Thr442 is subject to Phosphothreonine. Ser444 is modified (phosphoserine). A compositionally biased stretch (low complexity) spans 456 to 467; that stretch reads TEPISSPSTSSI. Residues 492–511 show a composition bias toward polar residues; that stretch reads QPSSNVPTKFTGGASESSSV. Ser549 carries the post-translational modification Phosphoserine. Residues 549 to 560 show a composition bias toward low complexity; that stretch reads SPSSISSRLPSS. Polar residues-rich tracts occupy residues 561 to 574 and 583 to 606; these read NLEQGSSSSVTKSP and KASSPVTSKGVSINEKSAVNNYAT. Positions 698–808 constitute a PH domain; sequence TADCHGWMRK…WSSAFLKATV (111 aa).

Its subcellular location is the cytoplasm. The protein localises to the membrane. Has a role in cell elongation and separation. This chain is Protein pob1 (pob1), found in Schizosaccharomyces pombe (strain 972 / ATCC 24843) (Fission yeast).